Here is a 192-residue protein sequence, read N- to C-terminus: MDYALEQAIKTNLVLLVEFILEKHPTIERHTVYQKVEQLTSIQLGKVSSAKQSSKSTTTTTPKTGGRKKIRDAIERKKATIIVRKSQWSNYVLTVPDECHNDENLTDLIESNFVMDVTTKTIVATETKDGALRPLNRETIDICNKHKLRYEVPLNLNLYDNEDSTDAALVTEMEELGLTYASSDDEEEKNQN.

It belongs to the IIV-6 358L family.

This is an uncharacterized protein from Aedes vexans (Inland floodwater mosquito).